A 207-amino-acid chain; its full sequence is Outer-membrane lipoprotein carrier protein (207 aa).

Residues 1-22 (MKLSEKFCVFLFFLLFTSTTHA) form the signal peptide.

It belongs to the LolA family. As to quaternary structure, monomer.

The protein resides in the periplasm. Functionally, participates in the translocation of lipoproteins from the inner membrane to the outer membrane. Only forms a complex with a lipoprotein if the residue after the N-terminal Cys is not an aspartate (The Asp acts as a targeting signal to indicate that the lipoprotein should stay in the inner membrane). In Nitrosospira multiformis (strain ATCC 25196 / NCIMB 11849 / C 71), this protein is Outer-membrane lipoprotein carrier protein.